Reading from the N-terminus, the 501-residue chain is MAMAGLYRRLLPSPPAVDFASSQGKQLFLEAVQNGTMESFYRLVSYFQTQSEPAFCGLASLSMVLNALAIDPGRKWKGPWRWFDESMLDCCEPLDKIKARGISFGKLVCLAHCAGAKVEAFHASHSSIDHFRKYVMKCSTSDDCHVISSYHREALKQTGTGHFSPIGGYHAGKDMALILDVARFKYPPHWIPLTHLWEGMNYVDESTGKTRGFMLISRPHREPGMLYTLSCKHESWNSIAKFLIDDIPFLLTSEDVKDICKVLSVIVTSLPSNFEEFIKWVAEIRRGEDGSPSLSVEEKARLSVKEEILKQVQRTGLFKHVASFLSHSCSGHTPTSGDRDTFPVIAASVCCQGAEILGGKISSSAEYCCRETCMKCWKAEDDKPIRMVCGTVVNGNTEQGVDVLIPSSCGKLSCTCSSTTKSIRKHPASTDVLTVLLLSLPTSTWAGIADEKLLSEIHDLVSIENLPALLQEEVLHLRRQLHILKRCQEGKVDEDLGVPLS.

The Peptidase C83 domain maps to 1–221 (MAMAGLYRRL…GFMLISRPHR (221 aa)). Active-site residues include C56, H162, and D180.

Belongs to the phytochelatin synthase family. Expressed in roots, nodules and leaves.

The enzyme catalyses [Glu(-Cys)](n)-Gly + glutathione + H(+) = [Glu(-Cys)](n+1)-Gly + glycine. With respect to regulation, requires cadmium for activity. Also activated in vitro by Zn(2+), Cu(2+), Fe(2+) or Fe(3+) ions, but not by Co(2+) or Ni(2+) ions. Involved in the synthesis of phytochelatins (PC) and homophytochelatins (hPC), the heavy-metal-binding peptides of plants. The chain is Glutathione gamma-glutamylcysteinyltransferase 1 (PCS1) from Lotus japonicus (Lotus corniculatus var. japonicus).